Reading from the N-terminus, the 640-residue chain is Pleckstrin homology-like domain family B member 3 (640 aa).

Disordered regions lie at residues 1–100, 162–189, 241–262, 387–412, and 476–504; these read MGTR…AARR, LEQQAASEQRGRQQREQEQRRLSQERDR, LERESRQEEEDRDSPGPQVPDP, GLQRTGSLPRKRGERGSQRGSPRPLS, and REGTRRGTEGSSGPAVPAITAPPTPPHPP. Residues 76 to 90 show a composition bias toward low complexity; the sequence is PPIAMAATPPASTSS. Positions 104–327 form a coiled coil; the sequence is QQLEALTRVA…ERSRLLELNC (224 aa). Residues 170–189 show a composition bias toward basic and acidic residues; it reads QRGRQQREQEQRRLSQERDR. The stretch at 454–481 forms a coiled coil; it reads DIAHMERLLQQAMAERERLLKAREGTRR. Residues 495 to 504 are compositionally biased toward pro residues; the sequence is TAPPTPPHPP. In terms of domain architecture, PH spans 532–635; the sequence is GCCCRGPLVK…WMDVIVTAAD (104 aa).

The sequence is that of Pleckstrin homology-like domain family B member 3 (PHLDB3) from Homo sapiens (Human).